The chain runs to 251 residues: Triosephosphate isomerase (251 aa).

Residue 9-11 (NWK) coordinates substrate. His94 serves as the catalytic Electrophile. The active-site Proton acceptor is the Glu166. Substrate contacts are provided by residues Gly172, Ser211, and 232–233 (GG).

It belongs to the triosephosphate isomerase family. As to quaternary structure, homodimer.

Its subcellular location is the cytoplasm. It catalyses the reaction D-glyceraldehyde 3-phosphate = dihydroxyacetone phosphate. Its pathway is carbohydrate biosynthesis; gluconeogenesis. The protein operates within carbohydrate degradation; glycolysis; D-glyceraldehyde 3-phosphate from glycerone phosphate: step 1/1. Involved in the gluconeogenesis. Catalyzes stereospecifically the conversion of dihydroxyacetone phosphate (DHAP) to D-glyceraldehyde-3-phosphate (G3P). The sequence is that of Triosephosphate isomerase from Xanthomonas oryzae pv. oryzae (strain MAFF 311018).